A 322-amino-acid polypeptide reads, in one-letter code: Protein IRREGULAR XYLEM 15 (322 aa).

The chain crosses the membrane as a helical span at residues 28–48 (LWLLAFVSFFTIVFLLTLLYT).

As to expression, expressed in rosette leaves, stems and siliques. Expressed in the xylem.

It is found in the golgi apparatus membrane. In terms of biological role, required for xylan biosynthesis, but not directly involved in catalyzing the addition of sugars to the growing polymer. The sequence is that of Protein IRREGULAR XYLEM 15 (IRX15) from Arabidopsis thaliana (Mouse-ear cress).